Here is a 669-residue protein sequence, read N- to C-terminus: Zinc finger CCCH domain-containing protein 17 (669 aa).

Positions 1-11 are enriched in low complexity; the sequence is MFAPATQPQQQ. Positions 1-23 are disordered; the sequence is MFAPATQPQQQHEQKKQSETVSS. C3H1-type zinc fingers lie at residues 34-58, 60-86, and 114-141; these read DCVY…HSEY, RMNP…HPPL, and AKQP…HTPN. Disordered stretches follow at residues 150-175, 285-306, 376-589, and 642-669; these read PVEA…EKKL, VEDR…PDFS, GMRL…VMEE, and EEGE…EMLS. Basic and acidic residues-rich tracts occupy residues 164–175, 285–299, 392–406, 420–464, 478–499, and 547–579; these read KPIENNTEEKKL, VEDR…RGNS, SMDR…DTPR, KLRE…EENH, RRRE…ESKP, and NNKD…PKAE. Acidic residues-rich tracts occupy residues 580–589 and 642–659; these read VEEEGTVMEE and EEGE…GEED. Residues 660-669 show a composition bias toward basic and acidic residues; it reads IEKKTVEMLS.

This chain is Zinc finger CCCH domain-containing protein 17, found in Arabidopsis thaliana (Mouse-ear cress).